A 375-amino-acid polypeptide reads, in one-letter code: Probable aminomethyltransferase (375 aa).

This sequence belongs to the GcvT family. The glycine cleavage system is composed of four proteins: P, T, L and H.

It carries out the reaction N(6)-[(R)-S(8)-aminomethyldihydrolipoyl]-L-lysyl-[protein] + (6S)-5,6,7,8-tetrahydrofolate = N(6)-[(R)-dihydrolipoyl]-L-lysyl-[protein] + (6R)-5,10-methylene-5,6,7,8-tetrahydrofolate + NH4(+). Functionally, the glycine cleavage system catalyzes the degradation of glycine. The sequence is that of Probable aminomethyltransferase from Aeropyrum pernix (strain ATCC 700893 / DSM 11879 / JCM 9820 / NBRC 100138 / K1).